Here is a 162-residue protein sequence, read N- to C-terminus: RNA pyrophosphohydrolase (162 aa).

In terms of domain architecture, Nudix hydrolase spans 7–149 (KYRPCVGIML…KKEVYKTVIE (143 aa)). Residues 40 to 61 (GGVDDGEELEQAALRELLEEVG) carry the Nudix box motif.

Belongs to the Nudix hydrolase family. RppH subfamily. A divalent metal cation serves as cofactor.

Its function is as follows. Accelerates the degradation of transcripts by removing pyrophosphate from the 5'-end of triphosphorylated RNA, leading to a more labile monophosphorylated state that can stimulate subsequent ribonuclease cleavage. In Wolbachia pipientis wMel, this protein is RNA pyrophosphohydrolase.